Reading from the N-terminus, the 75-residue chain is Small ribosomal subunit protein bS18 (75 aa).

This sequence belongs to the bacterial ribosomal protein bS18 family. Part of the 30S ribosomal subunit. Forms a tight heterodimer with protein bS6.

Its function is as follows. Binds as a heterodimer with protein bS6 to the central domain of the 16S rRNA, where it helps stabilize the platform of the 30S subunit. The polypeptide is Small ribosomal subunit protein bS18 (Pseudoalteromonas atlantica (strain T6c / ATCC BAA-1087)).